We begin with the raw amino-acid sequence, 83 residues long: MNLTCMMIVAVLFLTAWTFVMADDSNNGLANLFSKSRYEMEDPEPSKLEKRKTCQRRWDFCPGALVGVITCCGGLICLGVMCI.

The N-terminal stretch at 1 to 22 (MNLTCMMIVAVLFLTAWTFVMA) is a signal peptide. Residues 23–50 (DDSNNGLANLFSKSRYEMEDPEPSKLEK) constitute a propeptide that is removed on maturation. Intrachain disulfides connect cysteine 54–cysteine 72, cysteine 61–cysteine 77, and cysteine 71–cysteine 82.

Belongs to the conotoxin O1 superfamily. In terms of tissue distribution, expressed by the venom duct.

It is found in the secreted. Its function is as follows. Mu-conotoxins block voltage-gated sodium channels (Nav). This is Mu-conotoxin-like PnMKLT1-014 from Conus pennaceus (Feathered cone).